The chain runs to 113 residues: Ribulose bisphosphate carboxylase small subunit (113 aa).

Belongs to the RuBisCO small chain family. Heterohexadecamer of 8 large and 8 small subunits. RuBisCO interacts with the C-terminus of CcmM, and can be found in complexes that also include carbonic anhydrase (ccaA).

The protein localises to the carboxysome. Functionally, ruBisCO catalyzes two reactions: the carboxylation of D-ribulose 1,5-bisphosphate, the primary event in carbon dioxide fixation, as well as the oxidative fragmentation of the pentose substrate in the photorespiration process. Both reactions occur simultaneously and in competition at the same active site. Although the small subunit is not catalytic it is essential for maximal activity. The protein is Ribulose bisphosphate carboxylase small subunit of Synechocystis sp. (strain ATCC 27184 / PCC 6803 / Kazusa).